The sequence spans 391 residues: GTPase Obg (391 aa).

One can recognise an Obg domain in the interval 1 to 159; sequence MKFIDEALIR…RDLLLELMLL (159 aa). The 174-residue stretch at 160 to 333 folds into the OBG-type G domain; it reads ADVGMLGLPN…LTRDIMDFIE (174 aa). Residues 166–173, 191–195, 213–216, 283–286, and 314–316 contribute to the GTP site; these read GLPNAGKS, FTTLV, DIPG, NKID, and SAA. Ser173 and Thr193 together coordinate Mg(2+).

This sequence belongs to the TRAFAC class OBG-HflX-like GTPase superfamily. OBG GTPase family. In terms of assembly, monomer. It depends on Mg(2+) as a cofactor.

It is found in the cytoplasm. Functionally, an essential GTPase which binds GTP, GDP and possibly (p)ppGpp with moderate affinity, with high nucleotide exchange rates and a fairly low GTP hydrolysis rate. Plays a role in control of the cell cycle, stress response, ribosome biogenesis and in those bacteria that undergo differentiation, in morphogenesis control. In Actinobacillus pleuropneumoniae serotype 7 (strain AP76), this protein is GTPase Obg.